The chain runs to 228 residues: PKHD-type hydroxylase Vapar_1809 (228 aa).

In terms of domain architecture, Fe2OG dioxygenase spans 78–179 (QISPPLFNRY…RTASYFWIQS (102 aa)). Residues His97, Asp99, and His160 each contribute to the Fe cation site. Arg170 contacts 2-oxoglutarate.

The cofactor is Fe(2+). L-ascorbate is required as a cofactor.

In Variovorax paradoxus (strain S110), this protein is PKHD-type hydroxylase Vapar_1809.